The primary structure comprises 532 residues: MSSDSGPLHRRTIPISVHIFSGFFYAPFYAPQLTQFIVTITMYSTYQRPAGYQPRQQPQGEEDRRPAHRRTVDHGSAFGKWHLDRLSGRTIQPANMRSEQSYIVDLLPPSAYTNINGSLRSTNPHITSVAATPAKFIQVALNKVRHPVYSATWTPDGRRLLTGSMSGEFTLWNGMTFNFESIMQAHESGVRSLKYSHSGEWLLSGDHEGNVKFWQPSLNCVNVIDKAHRESIRELAFAPSDHKFVTGSDDGLLKIWDFHESSNAESVLKGHGWDVKSVDWHSELGLIVSGSKDNLIKLWDPRSAKNVNTFHGFKNTVMKTTFQPTGTKRLLAAGCRDRTCRILDLRMLNSGSSEAGPTAGTDMPTRGDRSMAVLRGHDSDVFSLTWHPTHANVVTSGTKTGSIYTFNVDTTPAGGAYGPDSGILPVNTIPSAHDYCVSTLDYHPEGHVLCSGGLDRMTRFWARPRPGDPTSFRDKYYEPKEEGVSVKTLPGVNNATSRAGMARVEHVSTQHFNTAQPEVTDDEPVSIPGFAR.

A disordered region spans residues 50–72; the sequence is AGYQPRQQPQGEEDRRPAHRRTV. A compositionally biased stretch (basic and acidic residues) spans 61-72; that stretch reads EEDRRPAHRRTV. 7 WD repeats span residues 143 to 182, 185 to 224, 227 to 266, 270 to 309, 312 to 353, 376 to 416, and 432 to 471; these read KVRH…FESI, AHES…VNVI, AHRE…NAES, GHGW…NVNT, GFKN…SGSS, GHDS…AGGA, and AHDY…DPTS. A disordered region spans residues 513-532; the sequence is NTAQPEVTDDEPVSIPGFAR.

The protein resides in the nucleus. Functionally, required for 3'-end cleavage and polyadenylation of pre-mRNAs. Also involved in chromosome segregation where it has a role in chromosome attachment to the mitotic spindle. This is Polyadenylation factor subunit 2 (PFS2) from Yarrowia lipolytica (strain CLIB 122 / E 150) (Yeast).